The primary structure comprises 384 residues: Soluble hydrogenase, small subunit (384 aa).

Lysine 194 bears the N6-(pyridoxal phosphate)lysine mark.

Belongs to the class-V pyridoxal-phosphate-dependent aminotransferase family. In terms of assembly, heterodimer of a large and a small subunit. It depends on pyridoxal 5'-phosphate as a cofactor.

The protein localises to the cytoplasm. Soluble hydrogenase catalyzes both production and consumption of hydrogen from suitable artificial electron donors or acceptors. This subunit catalyzes the tritium-exchange activity. This chain is Soluble hydrogenase, small subunit, found in Synechococcus sp. (strain PCC 6716).